The following is a 352-amino-acid chain: Divinyl chlorophyll a/b light-harvesting protein PcbH (352 aa).

The next 6 membrane-spanning stretches (helical) occupy residues 27–47, 88–108, 140–160, 202–222, 242–262, and 309–329; these read FIGSHVGHTGIICFATGASCL, VATIAIFHLIFSMVYGGAGLA, FILGHHLIFLGVANIWFVEWA, VMSGHAFLAFLQISGGAFHIA, AVLSWSLAGLFLMGVVAAFWA, and LVNVQYYFAFFCLQGHLWHAL.

Belongs to the PsbB/PsbC family. IsiA/Pcb subfamily. In terms of assembly, the antenna complex consists of divinyl chlorophylls (a and b) and divinyl chlorophyll a/b binding proteins and binds more divinyl chlorophyll b than does the antenna complex from high-light-adapted Prochlorococcus. The cofactor is divinyl chlorophyll a. Divinyl chlorophyll b serves as cofactor.

It is found in the cellular thylakoid membrane. In terms of biological role, the antenna complex functions as a light receptor, it captures and delivers excitation energy to photosystems II and I. The Prochlorales pcb genes are not related to higher plant LHCs. The protein is Divinyl chlorophyll a/b light-harvesting protein PcbH (pcbH) of Prochlorococcus marinus (strain SARG / CCMP1375 / SS120).